The following is a 232-amino-acid chain: Flagellar L-ring protein (232 aa).

The signal sequence occupies residues M1 to G21. C22 carries the N-palmitoyl cysteine lipid modification. C22 carries the S-diacylglycerol cysteine lipid modification.

This sequence belongs to the FlgH family. In terms of assembly, the basal body constitutes a major portion of the flagellar organelle and consists of four rings (L,P,S, and M) mounted on a central rod.

It localises to the cell outer membrane. The protein localises to the bacterial flagellum basal body. Functionally, assembles around the rod to form the L-ring and probably protects the motor/basal body from shearing forces during rotation. The sequence is that of Flagellar L-ring protein from Shigella boydii serotype 4 (strain Sb227).